A 434-amino-acid polypeptide reads, in one-letter code: Glutamyl-tRNA reductase (434 aa).

Residues 52 to 55 (TCNR), Ser-115, 120 to 122 (ETQ), and Gln-126 each bind substrate. Residue Cys-53 is the Nucleophile of the active site. 195–200 (GAGEMI) provides a ligand contact to NADP(+).

It belongs to the glutamyl-tRNA reductase family. In terms of assembly, homodimer.

The enzyme catalyses (S)-4-amino-5-oxopentanoate + tRNA(Glu) + NADP(+) = L-glutamyl-tRNA(Glu) + NADPH + H(+). It participates in porphyrin-containing compound metabolism; protoporphyrin-IX biosynthesis; 5-aminolevulinate from L-glutamyl-tRNA(Glu): step 1/2. Functionally, catalyzes the NADPH-dependent reduction of glutamyl-tRNA(Glu) to glutamate 1-semialdehyde (GSA). The polypeptide is Glutamyl-tRNA reductase (Cupriavidus pinatubonensis (strain JMP 134 / LMG 1197) (Cupriavidus necator (strain JMP 134))).